We begin with the raw amino-acid sequence, 376 residues long: Heat stress transcription factor A-2a (376 aa).

The segment at 137 to 168 (LKTIKRRRPPPSSPPSSSSSSSSSQHQQQPAA) is disordered. Residues 151–160 (PSSSSSSSSS) show a composition bias toward low complexity. Residues 182–229 (VNRLQRDKSVLIAEVVKLRQEQQTTRAQMQAMEERISAAEQKQQQMTV) are a coiled coil. The tract at residues 185–235 (LQRDKSVLIAEVVKLRQEQQTTRAQMQAMEERISAAEQKQQQMTVFLARAM) is hydrophobic repeat HR-A/B. The Nuclear localization signal signature appears at 265–269 (KKRRR). Disordered regions lie at residues 296–319 (VAEPDGDTTPRGDGGGGGGGDTES) and 332–362 (KQREDGVAGGVQESNSGGADVDNDEEDDDDD). Gly residues predominate over residues 307–316 (GDGGGGGGGD). An AHA motif is present at residues 318–325 (ESFWMQLL). Residues 352 to 362 (VDNDEEDDDDD) are compositionally biased toward acidic residues. Residues 366 to 373 (LVQSIYHL) carry the Nuclear export signal motif.

The protein belongs to the HSF family. Class A subfamily. Homotrimer. In terms of processing, exhibits temperature-dependent phosphorylation.

The protein resides in the cytoplasm. It is found in the nucleus. Functionally, transcriptional regulator that specifically binds DNA of heat shock promoter elements (HSE). This is Heat stress transcription factor A-2a (HSFA2A) from Oryza sativa subsp. japonica (Rice).